A 130-amino-acid polypeptide reads, in one-letter code: Probable 4-amino-4-deoxy-L-arabinose-phosphoundecaprenol flippase subunit ArnF (130 aa).

Residues 1–4 (MGYG) lie on the Cytoplasmic side of the membrane. A helical membrane pass occupies residues 5 to 25 (WALFSVALVSAAQLLLKWVMM). Residues 26–44 (HLPPLGALRLWLDPAYAEP) lie on the Periplasmic side of the membrane. The chain crosses the membrane as a helical span at residues 45–65 (LALLMGGLLAYVCSMGCWFMA). Residues 66-74 (LRRLPLNKA) are Cytoplasmic-facing. A helical transmembrane segment spans residues 75–95 (YPLLSLSYVLVAACALMIPEF). Residues 96–103 (NERFTFSR) lie on the Periplasmic side of the membrane. The chain crosses the membrane as a helical span at residues 104 to 124 (LMGVALICGGLLLICLPAGGK). At 125-130 (GDTPRR) the chain is on the cytoplasmic side.

Belongs to the ArnF family. In terms of assembly, heterodimer of ArnE and ArnF.

The protein resides in the cell inner membrane. The protein operates within bacterial outer membrane biogenesis; lipopolysaccharide biosynthesis. Its function is as follows. Translocates 4-amino-4-deoxy-L-arabinose-phosphoundecaprenol (alpha-L-Ara4N-phosphoundecaprenol) from the cytoplasmic to the periplasmic side of the inner membrane. The chain is Probable 4-amino-4-deoxy-L-arabinose-phosphoundecaprenol flippase subunit ArnF from Sodalis glossinidius (strain morsitans).